The sequence spans 650 residues: Alpha-agglutinin (650 aa).

The N-terminal stretch at 1 to 19 is a signal peptide; the sequence is MFTFLKIILWLFSLALASA. 4 N-linked (GlcNAc...) asparagine glycosylation sites follow: asparagine 79, asparagine 109, asparagine 135, and asparagine 248. Cysteine 97 and cysteine 114 are oxidised to a cystine. Cysteine 202 and cysteine 300 are oxidised to a cystine. The tract at residues 216-322 is ig-like fold domain important for alpha-agglutinin activity, contributing to a functional binding site for a-agglutinin; sequence YDSSNNNVDL…FSTTREFIVY (107 aa). Serine 282 is a glycosylation site (O-linked (Man...) serine). O-linked (Man...) threonine glycans are attached at residues threonine 289, threonine 299, and threonine 303. Asparagine 306 is a glycosylation site (N-linked (GlcNAc...) asparagine). 3 O-linked (Man...) threonine glycosylation sites follow: threonine 307, threonine 308, and threonine 311. Serine 314 carries O-linked (Man...) serine glycosylation. O-linked (Man...) threonine glycans are attached at residues threonine 315, threonine 316, and threonine 329. Serine 331, serine 334, serine 335, and serine 338 each carry an O-linked (Man...) serine glycan. O-linked (Man...) threonine glycosylation is found at threonine 339, threonine 340, threonine 341, threonine 342, and threonine 345. 2 tandem repeats follow at residues 339–378 and 384–423. The 2 X 40 AA tandem repeats stretch occupies residues 339-423; it reads TTTTDLTSIN…EVISDVETIS (85 aa). O-linked (Man...) serine glycosylation is present at serine 346. O-linked (Man...) threonine glycosylation is present at threonine 349. An O-linked (Man...) serine glycan is attached at serine 350. N-linked (GlcNAc...) asparagine glycosylation is found at asparagine 364, asparagine 402, asparagine 485, asparagine 501, and asparagine 614. Glycine 627 carries GPI-anchor amidated glycine lipidation. Positions 628–650 are cleaved as a propeptide — removed in mature form; the sequence is KASIFFSAELGSIIFLLLSYLLF.

It to C.albicans ALS1. In terms of assembly, interacts with AGA2. In terms of processing, N-glycosylated, and O-glycosylated by both PMT1 and PMT2. Post-translationally, the GPI-anchor is attached to the protein in the endoplasmic reticulum and serves to target the protein to the cell surface. There, the glucosamine-inositol phospholipid moiety is cleaved off and the GPI-modified mannoprotein is covalently attached via its lipidless GPI glycan remnant to the 1,6-beta-glucan of the outer cell wall layer.

Its subcellular location is the secreted. It localises to the cell wall. It is found in the membrane. In terms of biological role, cell surface glycoprotein promoting cell-cell contact to facilitate mating. S.cerevisiae A and alpha cells express the complementary cell surface glycoproteins A-agglutinin and alpha-, respectively, which interact with one another to promote cellular aggregation during mating. This Saccharomyces cerevisiae (strain ATCC 204508 / S288c) (Baker's yeast) protein is Alpha-agglutinin (SAG1).